We begin with the raw amino-acid sequence, 475 residues long: Trifunctional enzyme subunit beta, mitochondrial (475 aa).

Residues 1 to 34 (MISLLTYTLKNLPNTSKWALRFCMRPLSSSSQLQ) constitute a mitochondrion transit peptide. K73 is subject to N6-acetyllysine; alternate. K73 carries the N6-succinyllysine; alternate modification. Residue C139 is the Acyl-thioester intermediate of the active site. An intramembrane segment occupies 174–221 (IRHSRKMRKMMLDLNKAKTLAQRLSIISKFRLNFLSPELPAVSEFSTS). K189 bears the N6-acetyllysine; alternate mark. At K189 the chain carries N6-succinyllysine; alternate. N6-succinyllysine occurs at positions 191 and 292. The residue at position 294 (K294) is an N6-acetyllysine; alternate. N6-succinyllysine; alternate is present on K294. Residue K299 is modified to N6-acetyllysine. Residue K333 is modified to N6-acetyllysine; alternate. Position 333 is an N6-succinyllysine; alternate (K333). 2 positions are modified to N6-acetyllysine: K349 and K362. The active-site Proton donor/acceptor is the C459.

Belongs to the thiolase-like superfamily. Thiolase family. As to quaternary structure, heterotetramer of 2 alpha/HADHA and 2 beta/HADHB subunits; forms the mitochondrial trifunctional enzyme. Also purified as higher order heterooligomers including a 4 alpha/HADHA and 4 beta/HADHB heterooligomer which physiological significance remains unclear. The mitochondrial trifunctional enzyme interacts with MTLN. Interacts with RSAD2/viperin.

It is found in the mitochondrion. It localises to the mitochondrion inner membrane. The protein resides in the mitochondrion outer membrane. The protein localises to the endoplasmic reticulum. The enzyme catalyses an acyl-CoA + acetyl-CoA = a 3-oxoacyl-CoA + CoA. It carries out the reaction butanoyl-CoA + acetyl-CoA = 3-oxohexanoyl-CoA + CoA. The catalysed reaction is hexanoyl-CoA + acetyl-CoA = 3-oxooctanoyl-CoA + CoA. It catalyses the reaction octanoyl-CoA + acetyl-CoA = 3-oxodecanoyl-CoA + CoA. The enzyme catalyses decanoyl-CoA + acetyl-CoA = 3-oxododecanoyl-CoA + CoA. It carries out the reaction dodecanoyl-CoA + acetyl-CoA = 3-oxotetradecanoyl-CoA + CoA. The catalysed reaction is tetradecanoyl-CoA + acetyl-CoA = 3-oxohexadecanoyl-CoA + CoA. Its pathway is lipid metabolism; fatty acid beta-oxidation. Mitochondrial trifunctional enzyme catalyzes the last three of the four reactions of the mitochondrial beta-oxidation pathway. The mitochondrial beta-oxidation pathway is the major energy-producing process in tissues and is performed through four consecutive reactions breaking down fatty acids into acetyl-CoA. Among the enzymes involved in this pathway, the trifunctional enzyme exhibits specificity for long-chain fatty acids. Mitochondrial trifunctional enzyme is a heterotetrameric complex composed of two proteins, the trifunctional enzyme subunit alpha/HADHA carries the 2,3-enoyl-CoA hydratase and the 3-hydroxyacyl-CoA dehydrogenase activities, while the trifunctional enzyme subunit beta/HADHB described here bears the 3-ketoacyl-CoA thiolase activity. In Bos taurus (Bovine), this protein is Trifunctional enzyme subunit beta, mitochondrial (HADHB).